We begin with the raw amino-acid sequence, 175 residues long: ATP synthase subunit b 2 (175 aa).

Residues L20–W40 form a helical membrane-spanning segment.

The protein belongs to the ATPase B chain family. F-type ATPases have 2 components, F(1) - the catalytic core - and F(0) - the membrane proton channel. F(1) has five subunits: alpha(3), beta(3), gamma(1), delta(1), epsilon(1). F(0) has four main subunits: a(1), b(2) and c(10-14). The alpha and beta chains form an alternating ring which encloses part of the gamma chain. F(1) is attached to F(0) by a central stalk formed by the gamma and epsilon chains, while a peripheral stalk is formed by the delta and b chains.

Its subcellular location is the cell inner membrane. F(1)F(0) ATP synthase produces ATP from ADP in the presence of a proton or sodium gradient. F-type ATPases consist of two structural domains, F(1) containing the extramembraneous catalytic core and F(0) containing the membrane proton channel, linked together by a central stalk and a peripheral stalk. During catalysis, ATP synthesis in the catalytic domain of F(1) is coupled via a rotary mechanism of the central stalk subunits to proton translocation. Its function is as follows. Component of the F(0) channel, it forms part of the peripheral stalk, linking F(1) to F(0). The sequence is that of ATP synthase subunit b 2 from Chlorobium luteolum (strain DSM 273 / BCRC 81028 / 2530) (Pelodictyon luteolum).